The following is a 59-amino-acid chain: Large ribosomal subunit protein uL30 (59 aa).

This sequence belongs to the universal ribosomal protein uL30 family. As to quaternary structure, part of the 50S ribosomal subunit.

The polypeptide is Large ribosomal subunit protein uL30 (Haemophilus influenzae (strain 86-028NP)).